Consider the following 619-residue polypeptide: Probable pectinesterase/pectinesterase inhibitor 25 (619 aa).

A signal peptide spans 1–23 (MKMQTLNFTSSLLFLSFIFLSCA). A disordered region spans residues 31 to 84 (SPSQPHSEPPSQLPFEPPVESPFFPPSQPPIFVPPSQPPSLPPSQSQSPSLACK). Over residues 37-72 (SEPPSQLPFEPPVESPFFPPSQPPIFVPPSQPPSLP) the composition is skewed to pro residues. Residues 73 to 231 (PSQSQSPSLA…TRLYSISLGL (159 aa)) form a pectinesterase inhibitor 25 region. N-linked (GlcNAc...) asparagine glycans are attached at residues Asn220, Asn255, Asn312, Asn325, and Asn364. A pectinesterase 25 region spans residues 302 to 601 (AVIVGPFKSD…FTVYNFTMGD (300 aa)). Thr380 lines the substrate pocket. The N-linked (GlcNAc...) asparagine glycan is linked to Asn382. Substrate is bound at residue Gln410. Asp433 serves as the catalytic Proton donor; for pectinesterase activity. Residues Cys447 and Cys467 are joined by a disulfide bond. Residue Asp454 is the Nucleophile; for pectinesterase activity of the active site. A glycan (N-linked (GlcNAc...) asparagine) is linked at Asn500. Arg522 and Trp524 together coordinate substrate. 3 N-linked (GlcNAc...) asparagine glycosylation sites follow: Asn550, Asn591, and Asn596.

In the N-terminal section; belongs to the PMEI family. This sequence in the C-terminal section; belongs to the pectinesterase family. Expressed in siliques.

It is found in the secreted. Its subcellular location is the cell wall. The enzyme catalyses [(1-&gt;4)-alpha-D-galacturonosyl methyl ester](n) + n H2O = [(1-&gt;4)-alpha-D-galacturonosyl](n) + n methanol + n H(+). It functions in the pathway glycan metabolism; pectin degradation; 2-dehydro-3-deoxy-D-gluconate from pectin: step 1/5. Its function is as follows. Acts in the modification of cell walls via demethylesterification of cell wall pectin. The polypeptide is Probable pectinesterase/pectinesterase inhibitor 25 (PME25) (Arabidopsis thaliana (Mouse-ear cress)).